Here is a 172-residue protein sequence, read N- to C-terminus: Sec-independent protein translocase protein TatB (172 aa).

The helical transmembrane segment at 1 to 21 (MFDIGWSELLVIGVVALIAIG) threads the bilayer.

It belongs to the TatB family. As to quaternary structure, the Tat system comprises two distinct complexes: a TatABC complex, containing multiple copies of TatA, TatB and TatC subunits, and a separate TatA complex, containing only TatA subunits. Substrates initially bind to the TatABC complex, which probably triggers association of the separate TatA complex to form the active translocon.

It localises to the cell inner membrane. Functionally, part of the twin-arginine translocation (Tat) system that transports large folded proteins containing a characteristic twin-arginine motif in their signal peptide across membranes. Together with TatC, TatB is part of a receptor directly interacting with Tat signal peptides. TatB may form an oligomeric binding site that transiently accommodates folded Tat precursor proteins before their translocation. The chain is Sec-independent protein translocase protein TatB from Rhodopseudomonas palustris (strain BisB18).